Consider the following 262-residue polypeptide: Pimeloyl-[acyl-carrier protein] methyl ester esterase (262 aa).

The AB hydrolase-1 domain maps to 15–242; it reads HLVLLHGWGL…AAHAPFISHP (228 aa). Residues W22, 82 to 83, and 143 to 147 each bind substrate; these read SL and FLALQ. S82 serves as the catalytic Nucleophile. Active-site residues include D207 and H235. H235 contributes to the substrate binding site.

It belongs to the AB hydrolase superfamily. Carboxylesterase BioH family. In terms of assembly, monomer.

It localises to the cytoplasm. The catalysed reaction is 6-carboxyhexanoyl-[ACP] methyl ester + H2O = 6-carboxyhexanoyl-[ACP] + methanol + H(+). Its pathway is cofactor biosynthesis; biotin biosynthesis. Functionally, the physiological role of BioH is to remove the methyl group introduced by BioC when the pimeloyl moiety is complete. It allows to synthesize pimeloyl-ACP via the fatty acid synthetic pathway through the hydrolysis of the ester bonds of pimeloyl-ACP esters. The polypeptide is Pimeloyl-[acyl-carrier protein] methyl ester esterase (Shigella flexneri).